We begin with the raw amino-acid sequence, 448 residues long: UDP-N-acetylmuramoylalanine--D-glutamate ligase (448 aa).

Residue Gly-112–Thr-118 participates in ATP binding.

It belongs to the MurCDEF family.

The protein localises to the cytoplasm. The enzyme catalyses UDP-N-acetyl-alpha-D-muramoyl-L-alanine + D-glutamate + ATP = UDP-N-acetyl-alpha-D-muramoyl-L-alanyl-D-glutamate + ADP + phosphate + H(+). It participates in cell wall biogenesis; peptidoglycan biosynthesis. Functionally, cell wall formation. Catalyzes the addition of glutamate to the nucleotide precursor UDP-N-acetylmuramoyl-L-alanine (UMA). This chain is UDP-N-acetylmuramoylalanine--D-glutamate ligase, found in Acinetobacter baumannii (strain ATCC 17978 / DSM 105126 / CIP 53.77 / LMG 1025 / NCDC KC755 / 5377).